The sequence spans 45 residues: Endo-1,4-beta-xylanase Xyn10A (45 aa).

This sequence belongs to the glycosyl hydrolase 10 (cellulase F) family.

It localises to the secreted. The protein resides in the extracellular space. It carries out the reaction Endohydrolysis of (1-&gt;4)-beta-D-xylosidic linkages in xylans.. It catalyses the reaction Endohydrolysis of (1-&gt;4)-beta-D-glucosidic linkages in cellulose, lichenin and cereal beta-D-glucans.. It participates in glycan degradation; xylan degradation. Has xylanase, avicelase and cellobiohydrolase activity. The sequence is that of Endo-1,4-beta-xylanase Xyn10A from Gloeophyllum trabeum (Brown rot fungus).